Consider the following 429-residue polypeptide: Ribosomal RNA small subunit methyltransferase B (429 aa).

Residues 254–260 (CAAPGGK), D277, D303, and D322 contribute to the S-adenosyl-L-methionine site. Residue C375 is the Nucleophile of the active site.

The protein belongs to the class I-like SAM-binding methyltransferase superfamily. RsmB/NOP family.

The protein resides in the cytoplasm. The catalysed reaction is cytidine(967) in 16S rRNA + S-adenosyl-L-methionine = 5-methylcytidine(967) in 16S rRNA + S-adenosyl-L-homocysteine + H(+). In terms of biological role, specifically methylates the cytosine at position 967 (m5C967) of 16S rRNA. The polypeptide is Ribosomal RNA small subunit methyltransferase B (Escherichia fergusonii (strain ATCC 35469 / DSM 13698 / CCUG 18766 / IAM 14443 / JCM 21226 / LMG 7866 / NBRC 102419 / NCTC 12128 / CDC 0568-73)).